Consider the following 256-residue polypeptide: Alcohol dehydrogenase (256 aa).

Position 12 to 35 (12 to 35 (FVAGLGGIGLDTSKELVKRDLKNL)) interacts with NAD(+). Ser140 contacts substrate. Residue Tyr153 is the Proton acceptor of the active site.

This sequence belongs to the short-chain dehydrogenases/reductases (SDR) family. In terms of assembly, homodimer.

It catalyses the reaction a primary alcohol + NAD(+) = an aldehyde + NADH + H(+). The catalysed reaction is a secondary alcohol + NAD(+) = a ketone + NADH + H(+). The polypeptide is Alcohol dehydrogenase (Adh) (Drosophila mauritiana (Fruit fly)).